The following is a 143-amino-acid chain: 3-dehydroquinate dehydratase (143 aa).

Tyr-23 acts as the Proton acceptor in catalysis. Residues Asn-74, His-80, and Asp-87 each coordinate substrate. Catalysis depends on His-100, which acts as the Proton donor. Substrate-binding positions include 101-102 (IS) and Arg-111.

It belongs to the type-II 3-dehydroquinase family. As to quaternary structure, homododecamer.

The enzyme catalyses 3-dehydroquinate = 3-dehydroshikimate + H2O. It participates in metabolic intermediate biosynthesis; chorismate biosynthesis; chorismate from D-erythrose 4-phosphate and phosphoenolpyruvate: step 3/7. Functionally, catalyzes a trans-dehydration via an enolate intermediate. The sequence is that of 3-dehydroquinate dehydratase from Endomicrobium trichonymphae.